The sequence spans 262 residues: Acyl-[acyl-carrier-protein]--UDP-N-acetylglucosamine O-acyltransferase (262 aa).

Belongs to the transferase hexapeptide repeat family. LpxA subfamily. Homotrimer.

It is found in the cytoplasm. The catalysed reaction is a (3R)-hydroxyacyl-[ACP] + UDP-N-acetyl-alpha-D-glucosamine = a UDP-3-O-[(3R)-3-hydroxyacyl]-N-acetyl-alpha-D-glucosamine + holo-[ACP]. It functions in the pathway glycolipid biosynthesis; lipid IV(A) biosynthesis; lipid IV(A) from (3R)-3-hydroxytetradecanoyl-[acyl-carrier-protein] and UDP-N-acetyl-alpha-D-glucosamine: step 1/6. Its function is as follows. Involved in the biosynthesis of lipid A, a phosphorylated glycolipid that anchors the lipopolysaccharide to the outer membrane of the cell. This chain is Acyl-[acyl-carrier-protein]--UDP-N-acetylglucosamine O-acyltransferase, found in Blochmanniella floridana.